We begin with the raw amino-acid sequence, 199 residues long: Potassium-transporting ATPase KdpC subunit (199 aa).

A helical membrane pass occupies residues 7 to 27 (PALVMTAALCLITGIIYPGLI).

Belongs to the KdpC family. As to quaternary structure, the system is composed of three essential subunits: KdpA, KdpB and KdpC.

The protein localises to the cell inner membrane. Functionally, part of the high-affinity ATP-driven potassium transport (or Kdp) system, which catalyzes the hydrolysis of ATP coupled with the electrogenic transport of potassium into the cytoplasm. This subunit acts as a catalytic chaperone that increases the ATP-binding affinity of the ATP-hydrolyzing subunit KdpB by the formation of a transient KdpB/KdpC/ATP ternary complex. This Gemmatimonas aurantiaca (strain DSM 14586 / JCM 11422 / NBRC 100505 / T-27) protein is Potassium-transporting ATPase KdpC subunit.